The sequence spans 440 residues: Rhamnogalacturonase A (440 aa).

The signal sequence occupies residues 1–18; that stretch reads MRALFLLALGSIPALVSG. A disulfide bridge links cysteine 39 with cysteine 65. Asparagine 50 carries N-linked (GlcNAc...) asparagine glycosylation. Aspartate 215 functions as the Proton donor in the catalytic mechanism. The cysteines at positions 217 and 234 are disulfide-linked. Histidine 290 is an active-site residue. A glycan (N-linked (GlcNAc...) asparagine) is linked at asparagine 317. 2 cysteine pairs are disulfide-bonded: cysteine 340/cysteine 346 and cysteine 368/cysteine 377. O-linked (Man) threonine glycosylation occurs at threonine 385. Residue serine 386 is glycosylated (O-linked (Man) serine). Residues threonine 388, threonine 389, and threonine 390 are each glycosylated (O-linked (Man) threonine). O-linked (Man) serine glycosylation is present at serine 391. 2 O-linked (Man) threonine glycosylation sites follow: threonine 392 and threonine 394. O-linked (Man) serine glycans are attached at residues serine 398 and serine 401. 3 O-linked (Man) threonine glycosylation sites follow: threonine 403, threonine 404, and threonine 416. Residue serine 418 is glycosylated (O-linked (Man) serine). Threonine 423 and threonine 426 each carry an O-linked (Man) threonine glycan. Serine 427 and serine 436 each carry an O-linked (Man) serine glycan.

It belongs to the glycosyl hydrolase 28 family. Post-translationally, the N-terminus is blocked. N-glycosylated and may also be O-glycosylated.

It is found in the secreted. It catalyses the reaction Endohydrolysis of alpha-D-GalA-(1-&gt;2)-alpha-L-Rha glycosidic bond in the rhamnogalacturonan I backbone with initial inversion of anomeric configuration releasing oligosaccharides with beta-D-GalA at the reducing end.. In terms of biological role, pectinolytic enzymes consist of four classes of enzymes: pectine lyase, polygalacturonase, pectin methylesterase and rhamnogalacturonase. Has a positive effect in the apple hot-mash liquefaction process. Hydrolyzes alpha-D-galacturonopyranosyl-(1,2)-alpha-L-rhamnopyranosyl linkages in the backbone of the hairy regions of pectins. The sequence is that of Rhamnogalacturonase A (rhgA) from Aspergillus aculeatus.